Here is a 261-residue protein sequence, read N- to C-terminus: tRNA pseudouridine synthase A (261 aa).

Aspartate 51 (nucleophile) is an active-site residue. Tyrosine 109 contacts substrate.

It belongs to the tRNA pseudouridine synthase TruA family. In terms of assembly, homodimer.

It carries out the reaction uridine(38/39/40) in tRNA = pseudouridine(38/39/40) in tRNA. Its function is as follows. Formation of pseudouridine at positions 38, 39 and 40 in the anticodon stem and loop of transfer RNAs. The protein is tRNA pseudouridine synthase A of Shewanella sp. (strain MR-7).